Reading from the N-terminus, the 677-residue chain is Threonine--tRNA ligase (677 aa).

A TGS domain is found at 1-59; that stretch reads MAQATISITVNGEAKEVEATTTGVELFAEDKNIIAVKINGENRDLYTPLNDGDTVDPIA. A catalytic region spans residues 255–561; it reads DHRKLGAEMD…LLEHYAGAFP (307 aa). 3 residues coordinate Zn(2+): C360, H411, and H538.

This sequence belongs to the class-II aminoacyl-tRNA synthetase family. Homodimer. Requires Zn(2+) as cofactor.

The protein localises to the cytoplasm. The catalysed reaction is tRNA(Thr) + L-threonine + ATP = L-threonyl-tRNA(Thr) + AMP + diphosphate + H(+). Its function is as follows. Catalyzes the attachment of threonine to tRNA(Thr) in a two-step reaction: L-threonine is first activated by ATP to form Thr-AMP and then transferred to the acceptor end of tRNA(Thr). Also edits incorrectly charged L-seryl-tRNA(Thr). The polypeptide is Threonine--tRNA ligase (Bifidobacterium longum (strain NCC 2705)).